The primary structure comprises 213 residues: Large ribosomal subunit protein uL1 (213 aa).

Belongs to the universal ribosomal protein uL1 family. In terms of assembly, part of the 50S ribosomal subunit.

Binds directly to 23S rRNA. Probably involved in E site tRNA release. Its function is as follows. Protein L1 is also a translational repressor protein, it controls the translation of its operon by binding to its mRNA. The protein is Large ribosomal subunit protein uL1 of Methanosarcina barkeri (strain Fusaro / DSM 804).